Here is a 184-residue protein sequence, read N- to C-terminus: Leucine-rich repeat-containing protein 20 (184 aa).

LRR repeat units follow at residues 23–44 (GSDT…IYKV), 51–72 (QIHL…FMTT), 75–96 (QLRE…VSSL), 98–120 (HLRA…TTLP), 121–141 (ALET…EKLA), and 145–167 (ALRV…APPL). Position 175 is a phosphoserine (S175).

The chain is Leucine-rich repeat-containing protein 20 (Lrrc20) from Mus musculus (Mouse).